Consider the following 247-residue polypeptide: Aliphatic sulfonates import ATP-binding protein SsuB 3 (247 aa).

Positions 13-227 (VRVRGAGRAF…SVVDPEFSAL (215 aa)) constitute an ABC transporter domain. 45 to 52 (GASGSGKS) serves as a coordination point for ATP.

It belongs to the ABC transporter superfamily. Aliphatic sulfonates importer (TC 3.A.1.17.2) family. As to quaternary structure, the complex is composed of two ATP-binding proteins (SsuB), two transmembrane proteins (SsuC) and a solute-binding protein (SsuA).

The protein localises to the cell membrane. The enzyme catalyses ATP + H2O + aliphatic sulfonate-[sulfonate-binding protein]Side 1 = ADP + phosphate + aliphatic sulfonateSide 2 + [sulfonate-binding protein]Side 1.. Functionally, part of the ABC transporter complex SsuABC involved in aliphatic sulfonates import. Responsible for energy coupling to the transport system. The protein is Aliphatic sulfonates import ATP-binding protein SsuB 3 of Nocardia farcinica (strain IFM 10152).